The sequence spans 639 residues: AP2-like ethylene-responsive transcription factor CRL5 (639 aa).

2 disordered regions span residues 25-59 (PHMA…QQQH) and 258-277 (GRKR…HHRK). Residues 43 to 59 (QQQQQQQQQQHHQQQQH) are compositionally biased toward low complexity. 2 consecutive DNA-binding regions (AP2/ERF) follow at residues 288-351 (QYRG…INFP) and 387-445 (MYRG…TNFD). Positions 547–561 (QQQQQHMSMSAASSL) are enriched in low complexity. The segment at 547-579 (QQQQQHMSMSAASSLVTSLSNSREGSPDRGGGL) is disordered.

This sequence belongs to the AP2/ERF transcription factor family. AP2 subfamily. Highly expressed at the base of the stem. Expressed in stems. Expressed a low levels in crown roots and seeds. Expressed in the stem region where adventitious (crown) root initiation occurs.

The protein localises to the nucleus. Functionally, acts as a positive regulator of adventitious (crown) root formation by promoting its initiation. Promotes adventitious root initiation through repression of cytokinin signaling by positively regulating the two-component response regulator RR1. Regulated by the auxin response factor and transcriptional activator ARF23/ARF1. In Oryza sativa subsp. japonica (Rice), this protein is AP2-like ethylene-responsive transcription factor CRL5.